Here is a 312-residue protein sequence, read N- to C-terminus: MGKKRNKVSVIGAGFTGATTAFLTAQKELADVVLVDIPQLENPTKGKALDMLEASPVQGFDANITGTANYEDTAGSDIVVITAGIARKPGMSRDDLVATNEKIMRSVTKEVVKYSPDCIIIVLTNPVDAMTYAVYKESGFPKERVIGQSGILDTARFRTFVAQELNLSVKDITGFVLGGHGDDMVPLVRYSYAGGIPLETLLPKDRIDAIVERTRKGGGEIVNLLGNGSAYYAPAASLTEMVEAILKDQRRVLPTIAYLEGEYGYEGIYLGVPTIIGGNGLEQIIELELTETEKSQLDKSVESVKNVMKVLS.

NAD(+) contacts are provided by residues 12-17 (GAGFTG) and D36. Residues R87 and R93 each coordinate substrate. Residues N100 and 123-125 (LTN) contribute to the NAD(+) site. Residue N125 participates in substrate binding. The residue at position 149 (S149) is a Phosphoserine. R156 is a substrate binding site. The active-site Proton acceptor is H180.

This sequence belongs to the LDH/MDH superfamily. MDH type 3 family.

The catalysed reaction is (S)-malate + NAD(+) = oxaloacetate + NADH + H(+). Functionally, catalyzes the reversible oxidation of malate to oxaloacetate. The sequence is that of Malate dehydrogenase from Bacillus licheniformis (strain ATCC 14580 / DSM 13 / JCM 2505 / CCUG 7422 / NBRC 12200 / NCIMB 9375 / NCTC 10341 / NRRL NRS-1264 / Gibson 46).